Consider the following 625-residue polypeptide: Alpha-amylase 1 (625 aa).

The first 22 residues, 1 to 22 (MGFSKIALFSLFALFGLPTSLA), serve as a signal peptide directing secretion. Cys-51 and Cys-59 are disulfide-bonded. Trp-105 contributes to the substrate binding site. Asn-143 contacts Ca(2+). Residues Asn-153, Asn-163, and Asn-180 are each glycosylated (N-linked (GlcNAc...) asparagine). Cys-172 and Cys-187 are oxidised to a cystine. Ca(2+)-binding residues include Glu-185 and Asp-198. A substrate-binding site is contributed by Arg-227. A Ca(2+)-binding site is contributed by Asp-229. Asp-229 acts as the Nucleophile in catalysis. Residue 232-233 (KQ) coordinates substrate. N-linked (GlcNAc...) asparagine glycosylation occurs at Asn-241. Position 253 (Glu-253) interacts with Ca(2+). Glu-253 (proton donor) is an active-site residue. Asn-260 and Asn-286 each carry an N-linked (GlcNAc...) asparagine glycan. An intrachain disulfide couples Cys-263 to Cys-306. Asp-322 lines the substrate pocket. Asn-331 is a glycosylation site (N-linked (GlcNAc...) asparagine). Residue Arg-370 coordinates substrate. N-linked (GlcNAc...) asparagine glycosylation is found at Asn-440 and Asn-461. The tract at residues 526-579 (SATSSSKSSSSSSSRSGSSSSSSSRSGSTSSSGSSHTITSTSQSVHTSGSSTST) is disordered. Residue Ser-603 is the site of GPI-anchor amidated serine attachment. Residues 604–625 (SANAVRVSILGVAAFIAIVLFI) constitute a propeptide, removed in mature form.

The protein belongs to the glycosyl hydrolase 13 family. Requires Ca(2+) as cofactor.

It localises to the cell membrane. The enzyme catalyses Endohydrolysis of (1-&gt;4)-alpha-D-glucosidic linkages in polysaccharides containing three or more (1-&gt;4)-alpha-linked D-glucose units.. In Schizosaccharomyces pombe (strain 972 / ATCC 24843) (Fission yeast), this protein is Alpha-amylase 1 (aah1).